The primary structure comprises 157 residues: Myosin essential light chain, striated adductor muscle (157 aa).

EF-hand domains follow at residues 7–44 (DEID…LGIN) and 82–117 (GTFA…LGER).

Its function is as follows. In molluscan muscle, calcium regulation is associated with myosin rather than with actin. Muscle myosin contains two types of light chains: the catalytic light chain, essential for ATPase activity, and the regulatory light chain, a calcium-binding protein responsible for Ca(2+) dependent binding and Ca(2+) dependent Mg-ATPase activity. This Argopecten irradians (Bay scallop) protein is Myosin essential light chain, striated adductor muscle.